A 255-amino-acid chain; its full sequence is Hydroxyacylglutathione hydrolase (255 aa).

7 residues coordinate Zn(2+): H56, H58, D60, H61, H114, D133, and H171.

Belongs to the metallo-beta-lactamase superfamily. Glyoxalase II family. As to quaternary structure, monomer. It depends on Zn(2+) as a cofactor.

The catalysed reaction is an S-(2-hydroxyacyl)glutathione + H2O = a 2-hydroxy carboxylate + glutathione + H(+). It participates in secondary metabolite metabolism; methylglyoxal degradation; (R)-lactate from methylglyoxal: step 2/2. Its function is as follows. Thiolesterase that catalyzes the hydrolysis of S-D-lactoyl-glutathione to form glutathione and D-lactic acid. This Rhodopseudomonas palustris (strain HaA2) protein is Hydroxyacylglutathione hydrolase.